Reading from the N-terminus, the 368-residue chain is tRNA-cytidine(32) 2-sulfurtransferase (368 aa).

A PP-loop motif motif is present at residues 95–100; sequence SGGKDS. Cys-170, Cys-173, and Cys-261 together coordinate [4Fe-4S] cluster.

The protein belongs to the TtcA family. As to quaternary structure, homodimer. Mg(2+) serves as cofactor. The cofactor is [4Fe-4S] cluster.

The protein localises to the cytoplasm. It carries out the reaction cytidine(32) in tRNA + S-sulfanyl-L-cysteinyl-[cysteine desulfurase] + AH2 + ATP = 2-thiocytidine(32) in tRNA + L-cysteinyl-[cysteine desulfurase] + A + AMP + diphosphate + H(+). It participates in tRNA modification. Functionally, catalyzes the ATP-dependent 2-thiolation of cytidine in position 32 of tRNA, to form 2-thiocytidine (s(2)C32). The sulfur atoms are provided by the cysteine/cysteine desulfurase (IscS) system. The polypeptide is tRNA-cytidine(32) 2-sulfurtransferase (Psychrobacter sp. (strain PRwf-1)).